We begin with the raw amino-acid sequence, 317 residues long: COP9 signalosome complex subunit 6b (317 aa).

Positions 11–164 constitute an MPN domain; it reads FKLHPLVMLN…VTIYESEFHV (154 aa).

Belongs to the peptidase M67A family. CSN6 subfamily. As to quaternary structure, component of the CSN complex, probably composed of CSN1, CSN2, CSN3, CSN4, CSN5 (CSN5A or CSN5B), CSN6 (CSN6A or CSN6B), CSN7 and CSN8. Interacts with itself. In the complex, it probably interacts directly with CSN4, CSN5A or CSN5B, and CSN7. Binds to the translation initiation factors TIF3E1.

The protein resides in the cytoplasm. It is found in the nucleus. Functionally, component of the COP9 signalosome complex (CSN), a complex involved in various cellular and developmental processes such as photomorphogenesis and auxin and jasmonate responses. The CSN complex is an essential regulator of the ubiquitin (Ubl) conjugation pathway by mediating the deneddylation of the cullin subunits of SCF-type E3 ligase complexes, leading to decrease the Ubl ligase activity of SCF. It is involved in repression of photomorphogenesis in darkness by regulating the activity of COP1-containing Ubl ligase complexes. The complex is also required for degradation of PSIAA6 by regulating the activity of the Ubl ligase SCF-TIR complex. Essential for the structural integrity of the CSN holocomplex. The sequence is that of COP9 signalosome complex subunit 6b from Arabidopsis thaliana (Mouse-ear cress).